The primary structure comprises 358 residues: Na(+)/H(+) exchange regulatory cofactor NHE-RF1 (358 aa).

Ser-2 carries the N-acetylserine modification. Residues Ser-2 and Ser-46 each carry the phosphoserine modification. The 81-residue stretch at 14–94 (LCCLEKGPNG…AVRLLVVDPE (81 aa)) folds into the PDZ 1 domain. Over residues 114-132 (QEAPGQAEPPAAAEVQGAG) the composition is skewed to low complexity. The disordered stretch occupies residues 114 to 192 (QEAPGQAEPP…DPDSPAEASG (79 aa)). A compositionally biased stretch (basic and acidic residues) spans 135–152 (NEPREADKSHPEQRELRP). Residues 154–234 (LCTMKKGPSG…ETKLLVVDRE (81 aa)) form the PDZ 2 domain. Residues Ser-162, Ser-269, Ser-280, Ser-290, and Ser-291 each carry the phosphoserine modification. The segment at 277-358 (ALESPRPALV…SKKNELFSNL (82 aa)) is disordered. The span at 288 to 306 (SASSDTSEELNSQDSPPKQ) shows a compositional bias: polar residues. A Phosphothreonine modification is found at Thr-293. A phosphoserine mark is found at Ser-294, Ser-299, and Ser-302. Over residues 307–319 (DSTAPSSTSSSDP) the composition is skewed to low complexity. Residues 348–358 (WSKKNELFSNL) are compositionally biased toward basic and acidic residues.

Homodimer, and heterodimer with NHERF2. Binds the N-termini of EZR, RDX and MSN. Binds the C-termini of PDGFRA, PDGFRB, ADRB2, NOS2 and CFTR. Binds ARHGAP17, EPI64, RACK1, OPRK1, GNAQ, CTNNB1 and PLCB3. Binds PDZK1. Interacts with CLCN3. Binds the C-terminus of PAG1. In resting T-cells, part of a PAG1-NHERF1-MSN complex which is disrupted upon TCR activation. Forms a complex with CFTR and SLC4A7. Forms a complex with SLC4A7 and ATP6V1B1. Interacts with TRPC4 (via the PDZ-binding domain). Directly interacts with HTR4. Interacts (via the PDZ 1 domain) with PODXL (via the C-terminal PDZ-binding motif DTHL); interaction is not detected in glomerular epithelium cells. Interacts (via the PDZ 1 domain) with PODXL (via the C-terminal PDZ-binding motif DTHL); the interaction take place early in the secretory pathway and is necessary for its apical membrane sorting. Interacts with SLC26A3. Interacts with MCC. Interacts with SLC34A1. Interacts (via the PDZ domains) with SLC26A6 isoform 4 and isoform 5. Interacts (via PDZ domains) with ACE2 (via PDZ-binding motif); the interaction may enhance ACE2 membrane residence. Post-translationally, phosphorylated on serine residues. Detected in liver, kidney, pancreas, prostate, spleen, small intestine and placenta, in particular in the syncytiotrophoblast.

Its subcellular location is the cytoplasm. The protein resides in the apical cell membrane. The protein localises to the endomembrane system. It localises to the cell projection. It is found in the filopodium. Its subcellular location is the ruffle. The protein resides in the microvillus. In terms of biological role, scaffold protein that connects plasma membrane proteins with members of the ezrin/moesin/radixin family and thereby helps to link them to the actin cytoskeleton and to regulate their surface expression. Necessary for recycling of internalized ADRB2. Was first known to play a role in the regulation of the activity and subcellular location of SLC9A3. Necessary for cAMP-mediated phosphorylation and inhibition of SLC9A3. May enhance Wnt signaling. May participate in HTR4 targeting to microvilli. Involved in the regulation of phosphate reabsorption in the renal proximal tubules. Involved in sperm capacitation. May participate in the regulation of the chloride and bicarbonate homeostasis in spermatozoa. This Homo sapiens (Human) protein is Na(+)/H(+) exchange regulatory cofactor NHE-RF1.